The sequence spans 215 residues: Adenylate kinase (215 aa).

10-15 (GAGKGT) contributes to the ATP binding site. The segment at 30 to 59 (STGDILRENVKNETELGKKAKEYMDKGLLV) is NMP. AMP contacts are provided by residues Thr-31, Arg-36, 57–59 (LLV), 85–88 (GFPR), and Gln-92. An LID region spans residues 126–163 (GRRICKNCGASFHVIYRPPQKEGVCDVCGGELYQREDD). Arg-127 provides a ligand contact to ATP. Zn(2+) is bound by residues Cys-130 and Cys-133. An ATP-binding site is contributed by 136–137 (SF). Zn(2+) is bound by residues Cys-150 and Cys-153. 2 residues coordinate AMP: Arg-160 and Arg-171. Gln-198 is a binding site for ATP.

This sequence belongs to the adenylate kinase family. In terms of assembly, monomer.

The protein localises to the cytoplasm. The enzyme catalyses AMP + ATP = 2 ADP. It functions in the pathway purine metabolism; AMP biosynthesis via salvage pathway; AMP from ADP: step 1/1. Functionally, catalyzes the reversible transfer of the terminal phosphate group between ATP and AMP. Plays an important role in cellular energy homeostasis and in adenine nucleotide metabolism. This chain is Adenylate kinase, found in Caldicellulosiruptor bescii (strain ATCC BAA-1888 / DSM 6725 / KCTC 15123 / Z-1320) (Anaerocellum thermophilum).